The following is a 515-amino-acid chain: RNA-splicing ligase RtcB homolog (515 aa).

5 residues coordinate Mn(2+): Asp129, Cys132, His237, His269, and His363. Residue 236 to 240 (NHYAE) coordinates GMP. Residues 363 to 364 (HN), 412 to 415 (GGTM), Ser419, 438 to 441 (HGAG), and Lys514 each bind GMP. The active-site GMP-histidine intermediate is the His438.

It belongs to the RtcB family. As to quaternary structure, catalytic component of the tRNA-splicing ligase complex. It depends on Mn(2+) as a cofactor.

The enzyme catalyses a 3'-end 3'-phospho-ribonucleotide-RNA + a 5'-end dephospho-ribonucleoside-RNA + GTP = a ribonucleotidyl-ribonucleotide-RNA + GMP + diphosphate. It carries out the reaction a 3'-end 2',3'-cyclophospho-ribonucleotide-RNA + a 5'-end dephospho-ribonucleoside-RNA + GTP + H2O = a ribonucleotidyl-ribonucleotide-RNA + GMP + diphosphate + H(+). Catalytic subunit of the tRNA-splicing ligase complex that acts by directly joining spliced tRNA halves to mature-sized tRNAs by incorporating the precursor-derived splice junction phosphate into the mature tRNA as a canonical 3',5'-phosphodiester. May act as an RNA ligase with broad substrate specificity, and may function toward other RNAs. The polypeptide is RNA-splicing ligase RtcB homolog (Ostreococcus tauri).